The chain runs to 259 residues: Type-2Aa cytolytic delta-endotoxin (259 aa).

The protein belongs to the cyt1/cyt2 endotoxin family. Homodimer (protoxin) and monomer (active toxin). Active after proteolytic processing.

Functionally, kills the larvae of dipteran insects by making pores in the epithelial cell membrane of the insect midgut. This chain is Type-2Aa cytolytic delta-endotoxin (cyt2Aa1), found in Bacillus thuringiensis subsp. kyushuensis.